The primary structure comprises 352 residues: Fe(3+) ions import ATP-binding protein FbpC (352 aa).

One can recognise an ABC transporter domain in the interval 5–239 (LHIGHLSKSF…PADLDAALFI (235 aa)). ATP is bound at residue 37–44 (GASGCGKT).

The protein belongs to the ABC transporter superfamily. Fe(3+) ion importer (TC 3.A.1.10) family. In terms of assembly, the complex is composed of two ATP-binding proteins (FbpC), two transmembrane proteins (FbpB) and a solute-binding protein (FbpA).

It localises to the cell inner membrane. It carries out the reaction Fe(3+)(out) + ATP + H2O = Fe(3+)(in) + ADP + phosphate + H(+). Functionally, part of the ABC transporter complex FbpABC involved in Fe(3+) ions import. Responsible for energy coupling to the transport system. The protein is Fe(3+) ions import ATP-binding protein FbpC of Neisseria meningitidis serogroup A / serotype 4A (strain DSM 15465 / Z2491).